Consider the following 493-residue polypeptide: Telomere-binding protein subunit alpha (493 aa).

The disordered stretch occupies residues 1-30 (MSSAKRSTSRVSKKKAAPAKDGAPKKREQS). Residues 7-17 (STSRVSKKKAA) are compositionally biased toward basic residues.

Belongs to the telombin family. As to quaternary structure, heterodimer of an alpha and a beta subunit.

It localises to the nucleus. Its subcellular location is the chromosome. The protein localises to the telomere. Functionally, may function as protective capping of the single-stranded telomeric overhang. May also participate in telomere length regulation during DNA replication. The chain is Telomere-binding protein subunit alpha (STY56V) from Stylonychia mytilus (Ciliate).